A 277-amino-acid chain; its full sequence is Glutamate racemase (277 aa).

Substrate is bound by residues 25-26 (DS) and 57-58 (YG). C89 acts as the Proton donor/acceptor in catalysis. A substrate-binding site is contributed by 90 to 91 (NT). C204 (proton donor/acceptor) is an active-site residue. Residue 205 to 206 (TH) coordinates substrate.

This sequence belongs to the aspartate/glutamate racemases family.

The catalysed reaction is L-glutamate = D-glutamate. The protein operates within cell wall biogenesis; peptidoglycan biosynthesis. In terms of biological role, provides the (R)-glutamate required for cell wall biosynthesis. The chain is Glutamate racemase from Brucella ovis (strain ATCC 25840 / 63/290 / NCTC 10512).